A 231-amino-acid chain; its full sequence is Eukaryotic translation initiation factor 4E-1 (231 aa).

EIF4G-binding stretches follow at residues 56-59 (HPLE) and 66-102 (FDNP…NNIH). Residues 74–79 (RQTAWG), Lys-106, and 124–125 (WE) contribute to the mRNA site. An intrachain disulfide couples Cys-129 to Cys-167. Residues 150-159 (YTLLAMIGHQ) are EIF4G-binding. MRNA-binding positions include 174 to 179 (RAKGEK) and 219 to 223 (KRLDR).

This sequence belongs to the eukaryotic initiation factor 4E family. EIF4F is a multi-subunit complex, the composition of which varies with external and internal environmental conditions. It is composed of at least EIF4A, EIF4E and EIF4G. EIF4E is also known to interact with other partners. In higher plants two isoforms of EIF4F have been identified, named isoform EIF4F and isoform EIF(iso)4F. Isoform EIF4F has subunits p220 and p26, whereas isoform EIF(iso)4F has subunits p82 and p28. As to quaternary structure, (Microbial infection) Interacts with potyvirus viral genome-linked protein (VPg); mostly with tobacco etch virus (TEV-HAT) VPg and, to a lower extent, with potato virus Y (PVY-LYE84 and PVY-LYE90) and pepper mottle virus (PepMoV) VPg. In terms of processing, according to the redox status, the Cys-129-Cys-167 disulfide bridge may have a role in regulating protein function by affecting its ability to bind capped mRNA.

It is found in the nucleus. The protein localises to the cytoplasm. Component of the protein complex eIF4F, which is involved in the recognition of the mRNA cap, ATP-dependent unwinding of 5'-terminal secondary structure and recruitment of mRNA to the ribosome. Recognizes and binds the 7-methylguanosine-containing mRNA cap during an early step in the initiation of protein synthesis and facilitates ribosome binding by inducing the unwinding of the mRNAs secondary structures. Key component of recessive resistance to potyviruses. Its function is as follows. (Microbial infection) Susceptibility host factor required for viral infection (e.g. potato virus Y (PVY), pepper mottle virus (PepMoV) and tobacco etch virus (TEV)) by recruiting viral RNAs to the host ribosomal complex via an interaction with viral genome-linked protein (VPg). The sequence is that of Eukaryotic translation initiation factor 4E-1 from Solanum lycopersicum (Tomato).